Here is a 426-residue protein sequence, read N- to C-terminus: Gamma-glutamyl phosphate reductase (426 aa).

Belongs to the gamma-glutamyl phosphate reductase family.

It localises to the cytoplasm. The catalysed reaction is L-glutamate 5-semialdehyde + phosphate + NADP(+) = L-glutamyl 5-phosphate + NADPH + H(+). It participates in amino-acid biosynthesis; L-proline biosynthesis; L-glutamate 5-semialdehyde from L-glutamate: step 2/2. Catalyzes the NADPH-dependent reduction of L-glutamate 5-phosphate into L-glutamate 5-semialdehyde and phosphate. The product spontaneously undergoes cyclization to form 1-pyrroline-5-carboxylate. This is Gamma-glutamyl phosphate reductase from Ralstonia nicotianae (strain ATCC BAA-1114 / GMI1000) (Ralstonia solanacearum).